The sequence spans 803 residues: DNA polymerase 2 (803 aa).

This sequence belongs to the DNA polymerase type-B family.

The enzyme catalyses DNA(n) + a 2'-deoxyribonucleoside 5'-triphosphate = DNA(n+1) + diphosphate. This Aeropyrum pernix (strain ATCC 700893 / DSM 11879 / JCM 9820 / NBRC 100138 / K1) protein is DNA polymerase 2 (polB).